A 297-amino-acid polypeptide reads, in one-letter code: Tyrosine recombinase XerC (297 aa).

The Core-binding (CB) domain maps to 1 to 83 (MAILDEFDEH…AVKAFTAWAK (83 aa)). Positions 104–291 (TLPAVLRQDQ…AVSRLRVVHD (188 aa)) constitute a Tyr recombinase domain. Catalysis depends on residues Arg148, Lys172, His243, Arg246, and His269. Residue Tyr278 is the O-(3'-phospho-DNA)-tyrosine intermediate of the active site.

The protein belongs to the 'phage' integrase family. XerC subfamily. As to quaternary structure, forms a cyclic heterotetrameric complex composed of two molecules of XerC and two molecules of XerD.

Its subcellular location is the cytoplasm. Its function is as follows. Site-specific tyrosine recombinase, which acts by catalyzing the cutting and rejoining of the recombining DNA molecules. The XerC-XerD complex is essential to convert dimers of the bacterial chromosome into monomers to permit their segregation at cell division. It also contributes to the segregational stability of plasmids. The polypeptide is Tyrosine recombinase XerC (Mycobacterium leprae (strain TN)).